Consider the following 170-residue polypeptide: Acetolactate synthase small subunit (170 aa).

The region spanning Thr-9–Glu-83 is the ACT domain. An Isoglutamyl lysine isopeptide (Lys-Gln) (interchain with Q-Cter in protein Pup) cross-link involves residue Lys-46.

Belongs to the acetolactate synthase small subunit family. Dimer of large and small chains.

It carries out the reaction 2 pyruvate + H(+) = (2S)-2-acetolactate + CO2. The protein operates within amino-acid biosynthesis; L-isoleucine biosynthesis; L-isoleucine from 2-oxobutanoate: step 1/4. It participates in amino-acid biosynthesis; L-valine biosynthesis; L-valine from pyruvate: step 1/4. This is Acetolactate synthase small subunit (ilvH) from Mycolicibacterium smegmatis (strain ATCC 700084 / mc(2)155) (Mycobacterium smegmatis).